A 133-amino-acid polypeptide reads, in one-letter code: Small ribosomal subunit protein eS8 (133 aa).

Residues 1 to 31 (MGFYQGPDNRKITGGLKGKHRDKRKYEIGNP) are disordered.

Belongs to the eukaryotic ribosomal protein eS8 family. Part of the 30S ribosomal subunit.

In Saccharolobus solfataricus (strain ATCC 35092 / DSM 1617 / JCM 11322 / P2) (Sulfolobus solfataricus), this protein is Small ribosomal subunit protein eS8.